Consider the following 72-residue polypeptide: UPF0270 protein YheU (72 aa).

Belongs to the UPF0270 family.

The sequence is that of UPF0270 protein YheU from Escherichia fergusonii (strain ATCC 35469 / DSM 13698 / CCUG 18766 / IAM 14443 / JCM 21226 / LMG 7866 / NBRC 102419 / NCTC 12128 / CDC 0568-73).